The primary structure comprises 951 residues: Translation initiation factor IF-2 (951 aa).

2 disordered regions span residues 58–255 (AERK…AVVI) and 305–329 (DVSRDKRRGRQPGRPISEEQAKSLS). The span at 101–170 (AEPQYAEPQQ…PQAQPAQPAA (70 aa)) shows a compositional bias: low complexity. A compositionally biased stretch (pro residues) spans 171 to 216 (PVAPPAPSAQPSAPQPPAAQPRPPQPPMPSRPPPAGYRPAPPPGAR). Positions 217-234 (PPMSAAPGAPAQPGAAGQ) are enriched in low complexity. A tr-type G domain is found at 450–619 (IRPPVVTVMG…ALQSEVLELK (170 aa)). Residues 459 to 466 (GHVDHGKT) form a G1 region. 459–466 (GHVDHGKT) is a binding site for GTP. The segment at 484–488 (GITQH) is G2. The segment at 505–508 (DTPG) is G3. Residues 505–509 (DTPGH) and 559–562 (NKVD) contribute to the GTP site. Residues 559–562 (NKVD) are G4. Positions 595-597 (SAR) are G5.

The protein belongs to the TRAFAC class translation factor GTPase superfamily. Classic translation factor GTPase family. IF-2 subfamily.

The protein localises to the cytoplasm. In terms of biological role, one of the essential components for the initiation of protein synthesis. Protects formylmethionyl-tRNA from spontaneous hydrolysis and promotes its binding to the 30S ribosomal subunits. Also involved in the hydrolysis of GTP during the formation of the 70S ribosomal complex. This is Translation initiation factor IF-2 from Anaeromyxobacter dehalogenans (strain 2CP-1 / ATCC BAA-258).